The primary structure comprises 227 residues: Type II restriction enzyme ScaI (227 aa).

The disordered stretch occupies residues 12-35; the sequence is EARVGTRTGGPAMRPKTSDSPYFG.

It carries out the reaction Endonucleolytic cleavage of DNA to give specific double-stranded fragments with terminal 5'-phosphates.. A P subtype restriction enzyme that recognizes the double-stranded sequence 5'-AGTACT-3' and cleaves after T-3. The polypeptide is Type II restriction enzyme ScaI (Streptomyces caespitosus).